Reading from the N-terminus, the 661-residue chain is UvrABC system protein B (661 aa).

Positions 26-413 (KGIQEGKKHQ…TDEMVEQIIR (388 aa)) constitute a Helicase ATP-binding domain. Residue 39–46 (GATGTGKT) participates in ATP binding. The short motif at 92 to 115 (YYDYYQPEAYVPQTDTFIEKDASI) is the Beta-hairpin element. One can recognise a Helicase C-terminal domain in the interval 430 to 596 (QIDDLIGEIQ…TINKEIRDVI (167 aa)). A UVR domain is found at 625 to 660 (QKVVEQMEHEMKEAAKALDFERAAELRDLLLELKAE).

The protein belongs to the UvrB family. As to quaternary structure, forms a heterotetramer with UvrA during the search for lesions. Interacts with UvrC in an incision complex.

It localises to the cytoplasm. The UvrABC repair system catalyzes the recognition and processing of DNA lesions. A damage recognition complex composed of 2 UvrA and 2 UvrB subunits scans DNA for abnormalities. Upon binding of the UvrA(2)B(2) complex to a putative damaged site, the DNA wraps around one UvrB monomer. DNA wrap is dependent on ATP binding by UvrB and probably causes local melting of the DNA helix, facilitating insertion of UvrB beta-hairpin between the DNA strands. Then UvrB probes one DNA strand for the presence of a lesion. If a lesion is found the UvrA subunits dissociate and the UvrB-DNA preincision complex is formed. This complex is subsequently bound by UvrC and the second UvrB is released. If no lesion is found, the DNA wraps around the other UvrB subunit that will check the other stand for damage. In Bacillus subtilis (strain 168), this protein is UvrABC system protein B.